The primary structure comprises 564 residues: Dihydroxy-acid dehydratase (564 aa).

Residue Cys53 participates in [2Fe-2S] cluster binding. Position 85 (Asp85) interacts with Mg(2+). Position 126 (Cys126) interacts with [2Fe-2S] cluster. Mg(2+) is bound by residues Asp127 and Lys128. Lys128 carries the post-translational modification N6-carboxylysine. Cys203 contributes to the [2Fe-2S] cluster binding site. Glu454 provides a ligand contact to Mg(2+). The active-site Proton acceptor is the Ser480.

It belongs to the IlvD/Edd family. Homodimer. The cofactor is [2Fe-2S] cluster. Mg(2+) is required as a cofactor.

It carries out the reaction (2R)-2,3-dihydroxy-3-methylbutanoate = 3-methyl-2-oxobutanoate + H2O. The enzyme catalyses (2R,3R)-2,3-dihydroxy-3-methylpentanoate = (S)-3-methyl-2-oxopentanoate + H2O. The protein operates within amino-acid biosynthesis; L-isoleucine biosynthesis; L-isoleucine from 2-oxobutanoate: step 3/4. Its pathway is amino-acid biosynthesis; L-valine biosynthesis; L-valine from pyruvate: step 3/4. Functionally, functions in the biosynthesis of branched-chain amino acids. Catalyzes the dehydration of (2R,3R)-2,3-dihydroxy-3-methylpentanoate (2,3-dihydroxy-3-methylvalerate) into 2-oxo-3-methylpentanoate (2-oxo-3-methylvalerate) and of (2R)-2,3-dihydroxy-3-methylbutanoate (2,3-dihydroxyisovalerate) into 2-oxo-3-methylbutanoate (2-oxoisovalerate), the penultimate precursor to L-isoleucine and L-valine, respectively. The protein is Dihydroxy-acid dehydratase of Clavibacter michiganensis subsp. michiganensis (strain NCPPB 382).